A 262-amino-acid chain; its full sequence is Putative hydro-lyase Cbei_2760 (262 aa).

It belongs to the D-glutamate cyclase family.

This is Putative hydro-lyase Cbei_2760 from Clostridium beijerinckii (strain ATCC 51743 / NCIMB 8052) (Clostridium acetobutylicum).